The following is a 461-amino-acid chain: Probable carboxypeptidase MGYG_04702 (461 aa).

The N-terminal stretch at 1-20 is a signal peptide; it reads MQKTYLLALVSLLASSLVEA. 2 N-linked (GlcNAc...) asparagine glycosylation sites follow: asparagine 48 and asparagine 99. Aspartate 176 provides a ligand contact to Zn(2+). Glutamate 208 (proton acceptor) is an active-site residue. Glutamate 209 contributes to the Zn(2+) binding site. N-linked (GlcNAc...) asparagine glycosylation is present at asparagine 396.

It belongs to the peptidase M20A family. It depends on Zn(2+) as a cofactor.

It localises to the secreted. The protein is Probable carboxypeptidase MGYG_04702 of Arthroderma gypseum (strain ATCC MYA-4604 / CBS 118893) (Microsporum gypseum).